A 219-amino-acid chain; its full sequence is Ribose-5-phosphate isomerase A (219 aa).

Substrate-binding positions include 28–31 (TGST), 81–84 (DGAD), and 94–97 (KGGG). The active-site Proton acceptor is the glutamate 103. Lysine 121 contributes to the substrate binding site.

This sequence belongs to the ribose 5-phosphate isomerase family. In terms of assembly, homodimer.

It catalyses the reaction aldehydo-D-ribose 5-phosphate = D-ribulose 5-phosphate. It participates in carbohydrate degradation; pentose phosphate pathway; D-ribose 5-phosphate from D-ribulose 5-phosphate (non-oxidative stage): step 1/1. Functionally, catalyzes the reversible conversion of ribose-5-phosphate to ribulose 5-phosphate. This is Ribose-5-phosphate isomerase A from Acidithiobacillus ferrooxidans (strain ATCC 23270 / DSM 14882 / CIP 104768 / NCIMB 8455) (Ferrobacillus ferrooxidans (strain ATCC 23270)).